The sequence spans 173 residues: MVDSYDDAFDGEKSKTQIKRELHALVELGERLTTLKADTLARLPLTDELRKALDEASRHTAHGARKRHMSFVGKLMRVQDLDAIHAVLEQIDSSSRQYNERFHGLERWRDRLIDGNDEDLERFVNEFPDTDRQHLRSLIRHAQHEKARNKPPAAARKVFKYIRDLDETQRGLR.

The protein belongs to the DarP family.

It is found in the cytoplasm. Its function is as follows. Member of a network of 50S ribosomal subunit biogenesis factors which assembles along the 30S-50S interface, preventing incorrect 23S rRNA structures from forming. Promotes peptidyl transferase center (PTC) maturation. The protein is Dual-action ribosomal maturation protein DarP of Pseudomonas entomophila (strain L48).